The sequence spans 166 residues: MNEDLISQIKEVVTAENQEKLIKIIQLLESSNYELRGKINPDLQLSASALVFKEDKLFFIEHPYQKELLLPAGHVELKESPLDTAIREFHEETGFFAKKMGKLVDVNLIDIPFNETKNEKKHQHIDFRYLLELEEQEAELAELPFFLLELEEAPEEFKKYYRYKNI.

One can recognise a Nudix hydrolase domain in the interval 42–166 (DLQLSASALV…FKKYYRYKNI (125 aa)). A Nudix box motif is present at residues 73 to 94 (GHVELKESPLDTAIREFHEETG). The Mg(2+) site is built by glutamate 88 and glutamate 92.

It belongs to the Nudix hydrolase family. As to quaternary structure, monomer. It depends on Mg(2+) as a cofactor.

Its pathway is cofactor biosynthesis; tetrahydrofolate biosynthesis; 2-amino-4-hydroxy-6-hydroxymethyl-7,8-dihydropteridine diphosphate from 7,8-dihydroneopterin triphosphate: step 1/4. Functionally, probably mediates the removal of pyrophosphate from dihydroneopterin triphosphate (DHNTP), a possible step in the pterin branch of the folate synthesis pathway. In Lactococcus lactis subsp. cremoris (strain MG1363), this protein is Probable DHNTP pyrophosphohydrolase (folQ).